Consider the following 540-residue polypeptide: Glucose-6-phosphate isomerase (540 aa).

The Proton donor role is filled by E351. Catalysis depends on residues H382 and K506.

The protein belongs to the GPI family.

It localises to the cytoplasm. The catalysed reaction is alpha-D-glucose 6-phosphate = beta-D-fructose 6-phosphate. It participates in carbohydrate biosynthesis; gluconeogenesis. Its pathway is carbohydrate degradation; glycolysis; D-glyceraldehyde 3-phosphate and glycerone phosphate from D-glucose: step 2/4. Catalyzes the reversible isomerization of glucose-6-phosphate to fructose-6-phosphate. This chain is Glucose-6-phosphate isomerase, found in Corynebacterium glutamicum (strain ATCC 13032 / DSM 20300 / JCM 1318 / BCRC 11384 / CCUG 27702 / LMG 3730 / NBRC 12168 / NCIMB 10025 / NRRL B-2784 / 534).